Reading from the N-terminus, the 31-residue chain is Cytochrome b6-f complex subunit 6 (31 aa).

A helical transmembrane segment spans residues 4 to 26 (ITSYFGFLLAASTITPALLIGLS).

It belongs to the PetL family. In terms of assembly, the 4 large subunits of the cytochrome b6-f complex are cytochrome b6, subunit IV (17 kDa polypeptide, PetD), cytochrome f and the Rieske protein, while the 4 small subunits are PetG, PetL, PetM and PetN. The complex functions as a dimer.

It localises to the plastid. It is found in the chloroplast thylakoid membrane. Functionally, component of the cytochrome b6-f complex, which mediates electron transfer between photosystem II (PSII) and photosystem I (PSI), cyclic electron flow around PSI, and state transitions. PetL is important for photoautotrophic growth as well as for electron transfer efficiency and stability of the cytochrome b6-f complex. The polypeptide is Cytochrome b6-f complex subunit 6 (Illicium oligandrum (Star anise)).